Consider the following 321-residue polypeptide: Ribosomal RNA small subunit methyltransferase H (321 aa).

S-adenosyl-L-methionine is bound by residues 43–45 (GGH), D63, F89, D110, and Q117. Residues 286–321 (HPAGKALRAGPRETRDNPRSRSAVLRVAERSERHAA) form a disordered region. Basic and acidic residues-rich tracts occupy residues 295 to 304 (GPRETRDNPR) and 312 to 321 (VAERSERHAA).

This sequence belongs to the methyltransferase superfamily. RsmH family.

The protein localises to the cytoplasm. The enzyme catalyses cytidine(1402) in 16S rRNA + S-adenosyl-L-methionine = N(4)-methylcytidine(1402) in 16S rRNA + S-adenosyl-L-homocysteine + H(+). In terms of biological role, specifically methylates the N4 position of cytidine in position 1402 (C1402) of 16S rRNA. In Acidithiobacillus ferrooxidans (strain ATCC 23270 / DSM 14882 / CIP 104768 / NCIMB 8455) (Ferrobacillus ferrooxidans (strain ATCC 23270)), this protein is Ribosomal RNA small subunit methyltransferase H.